Consider the following 465-residue polypeptide: 23S rRNA (uracil(1939)-C(5))-methyltransferase RlmD (465 aa).

A disordered region spans residues 1-22; that stretch reads MSEAVPTSARKSRNAPVAPGPA. The TRAM domain maps to 16 to 80; that stretch reads PVAPGPAPVL…PSYEQATVVD (65 aa). [4Fe-4S] cluster contacts are provided by Cys-93, Cys-99, Cys-102, and Cys-181. Residues Gln-289, Phe-318, Asn-323, Glu-339, Asn-367, and Asp-388 each contribute to the S-adenosyl-L-methionine site. Cys-421 serves as the catalytic Nucleophile.

It belongs to the class I-like SAM-binding methyltransferase superfamily. RNA M5U methyltransferase family. RlmD subfamily.

The enzyme catalyses uridine(1939) in 23S rRNA + S-adenosyl-L-methionine = 5-methyluridine(1939) in 23S rRNA + S-adenosyl-L-homocysteine + H(+). Functionally, catalyzes the formation of 5-methyl-uridine at position 1939 (m5U1939) in 23S rRNA. This Burkholderia lata (strain ATCC 17760 / DSM 23089 / LMG 22485 / NCIMB 9086 / R18194 / 383) protein is 23S rRNA (uracil(1939)-C(5))-methyltransferase RlmD.